Consider the following 524-residue polypeptide: Na(+)/H(+) antiporter NhaB (524 aa).

A run of 13 helical transmembrane segments spans residues 23-43 (LAIIAFLIINPLVFFFVSPFV), 45-65 (GWMLVIEFIFTLAMALKCYPL), 98-118 (LLLIFMVAGIYFMKQLLLFIF), 136-156 (CVASAFLSAFLDALTVIAVVI), 203-223 (LMMHAGVGTALGGVMTMVGEP), 239-259 (FFMRMLPVTLPVLCCGLLVCI), 304-324 (ALIGVWLVIALALHLAEVGLV), 325-345 (GLSVIILATSFCGITNEHALG), 358-378 (LTVFFAVVAVIIEQSLFTPII), 392-412 (LFYLFNGLLSSVSDNVFVGTV), 420-440 (AFELGVISLQQFELLAVAINT), 448-468 (ATPNGQAAFLFLLTSALAPLI), and 479-499 (ALPYTIVMTGVGLLGVEYLLV).

This sequence belongs to the NhaB Na(+)/H(+) (TC 2.A.34) antiporter family.

The protein resides in the cell inner membrane. The catalysed reaction is 2 Na(+)(in) + 3 H(+)(out) = 2 Na(+)(out) + 3 H(+)(in). Na(+)/H(+) antiporter that extrudes sodium in exchange for external protons. The protein is Na(+)/H(+) antiporter NhaB of Yersinia enterocolitica serotype O:8 / biotype 1B (strain NCTC 13174 / 8081).